The primary structure comprises 89 residues: Small ribosomal subunit protein uS15 (89 aa).

Basic and acidic residues predominate over residues 1 to 21; sequence MAITQERKNQLINEFKTHESD. The segment at 1–24 is disordered; it reads MAITQERKNQLINEFKTHESDTGS.

Belongs to the universal ribosomal protein uS15 family. As to quaternary structure, part of the 30S ribosomal subunit. Forms a bridge to the 50S subunit in the 70S ribosome, contacting the 23S rRNA.

Its function is as follows. One of the primary rRNA binding proteins, it binds directly to 16S rRNA where it helps nucleate assembly of the platform of the 30S subunit by binding and bridging several RNA helices of the 16S rRNA. In terms of biological role, forms an intersubunit bridge (bridge B4) with the 23S rRNA of the 50S subunit in the ribosome. This chain is Small ribosomal subunit protein uS15, found in Bacillus subtilis (strain 168).